The primary structure comprises 88 residues: MKTILLLLVRAYQLGISPFLGQNCRFYPSCSAYAFEAIGEYGALKGSFLATKRLCKCHPWHPGGVDPVPKKSSSKKTSSTTACGCGHS.

The segment at 64–88 (GVDPVPKKSSSKKTSSTTACGCGHS) is disordered.

Belongs to the UPF0161 family.

The protein resides in the cell inner membrane. Could be involved in insertion of integral membrane proteins into the membrane. This is Putative membrane protein insertion efficiency factor from Herminiimonas arsenicoxydans.